The chain runs to 106 residues: UPF0145 protein Csac_0771 (106 aa).

It belongs to the UPF0145 family.

This chain is UPF0145 protein Csac_0771, found in Caldicellulosiruptor saccharolyticus (strain ATCC 43494 / DSM 8903 / Tp8T 6331).